The chain runs to 309 residues: Aspartate carbamoyltransferase catalytic subunit (309 aa).

Carbamoyl phosphate is bound by residues Arg-55 and Thr-56. L-aspartate is bound at residue Lys-85. Carbamoyl phosphate is bound by residues Arg-106, His-135, and Gln-138. L-aspartate is bound by residues Arg-168 and Arg-230. Carbamoyl phosphate contacts are provided by Leu-268 and Pro-269.

Belongs to the aspartate/ornithine carbamoyltransferase superfamily. ATCase family. In terms of assembly, heterododecamer (2C3:3R2) of six catalytic PyrB chains organized as two trimers (C3), and six regulatory PyrI chains organized as three dimers (R2).

The enzyme catalyses carbamoyl phosphate + L-aspartate = N-carbamoyl-L-aspartate + phosphate + H(+). Its pathway is pyrimidine metabolism; UMP biosynthesis via de novo pathway; (S)-dihydroorotate from bicarbonate: step 2/3. Catalyzes the condensation of carbamoyl phosphate and aspartate to form carbamoyl aspartate and inorganic phosphate, the committed step in the de novo pyrimidine nucleotide biosynthesis pathway. This is Aspartate carbamoyltransferase catalytic subunit from Wigglesworthia glossinidia brevipalpis.